Consider the following 973-residue polypeptide: Coatomer subunit beta (973 aa).

HEAT repeat units lie at residues 98–133 (HEMI…REAE) and 134–170 (LLEQ…VSEH). Phosphoserine is present on Ser181. 2 HEAT repeats span residues 279–317 (NVLV…NNVG) and 318–354 (ALEE…SRNA). Ser540 is subject to Phosphoserine.

In terms of assembly, oligomeric complex that consists of at least the alpha, beta, beta', gamma, delta, epsilon and zeta subunits. The complex interacts with ARF1 and PAB1. The N-terminus is blocked.

Its subcellular location is the cytoplasm. It is found in the golgi apparatus membrane. It localises to the cytoplasmic vesicle. The protein localises to the COPI-coated vesicle membrane. Functionally, the coatomer is a cytosolic protein complex that binds to dilysine motifs and reversibly associates with Golgi non-clathrin-coated vesicles, which further mediate biosynthetic protein transport from the ER, via the Golgi up to the trans Golgi network. Coatomer complex is required for budding from Golgi membranes, and is essential for the retrograde Golgi-to-ER transport of dilysine-tagged proteins. Required for mitochondrial morphology. The polypeptide is Coatomer subunit beta (SEC26) (Saccharomyces cerevisiae (strain ATCC 204508 / S288c) (Baker's yeast)).